Consider the following 427-residue polypeptide: Dihydroorotase (427 aa).

2 residues coordinate Zn(2+): H58 and H60. Residues 60–62 (HYR) and N92 contribute to the substrate site. The Zn(2+) site is built by D150, H177, and H230. Residue N276 participates in substrate binding. D303 contacts Zn(2+). D303 is an active-site residue. Residues H307 and 321–322 (FG) each bind substrate.

This sequence belongs to the metallo-dependent hydrolases superfamily. DHOase family. Class I DHOase subfamily. Zn(2+) serves as cofactor.

It catalyses the reaction (S)-dihydroorotate + H2O = N-carbamoyl-L-aspartate + H(+). Its pathway is pyrimidine metabolism; UMP biosynthesis via de novo pathway; (S)-dihydroorotate from bicarbonate: step 3/3. Its function is as follows. Catalyzes the reversible cyclization of carbamoyl aspartate to dihydroorotate. This is Dihydroorotase from Lactobacillus leichmannii.